A 376-amino-acid chain; its full sequence is Pre-mRNA-splicing factor cwf25 (376 aa).

Positions 25–60 (KDEQAHKEEMKRVEQLRREIEEERQLLELHRLQEAA) form a coiled coil. 2 disordered regions span residues 153-211 (LMEK…DRNN) and 258-289 (RTSRQYSRSPSPDFRTRNHQFHSRDSQPITQR). The span at 154–167 (MEKRKYSLDSDRKS) shows a compositional bias: basic and acidic residues. A compositionally biased stretch (basic residues) spans 168–178 (KERRHRDRHHR). Residues 179 to 199 (SNQDRSRERSDNEQHSSDKRE) show a composition bias toward basic and acidic residues. 2 positions are modified to phosphoserine: Ser-266 and Ser-268. Residues 286–334 (ITQRHTDIESRLQKMQDNAKELDESRRKKIELLEKKERDEEQFLEKERR) adopt a coiled-coil conformation.

It belongs to the CWC25 family. As to quaternary structure, belongs to the 40S cdc5-associated complex (or cwf complex), a spliceosome sub-complex reminiscent of a late-stage spliceosome composed of the U2, U5 and U6 snRNAs and at least brr2, cdc5, cwf2/prp3, cwf3/syf1, cwf4/syf3, cwf5/ecm2, spp42/cwf6, cwf7/spf27, cwf8, cwf9, cwf10, cwf11, cwf12, prp45/cwf13, cwf14, cwf15, cwf16, cwf17, cwf18, cwf19, cwf20, cwf21, cwf22, cwf23, cwf24, cwf25, cwf26, cyp7/cwf27, cwf28, cwf29/ist3, lea1, msl1, prp5/cwf1, prp10, prp12/sap130, prp17, prp22, sap61, sap62, sap114, sap145, slu7, smb1, smd1, smd3, smf1, smg1 and syf2.

The protein resides in the nucleus. Involved in mRNA splicing. This Schizosaccharomyces pombe (strain 972 / ATCC 24843) (Fission yeast) protein is Pre-mRNA-splicing factor cwf25 (cwf25).